The primary structure comprises 402 residues: Shaggy-related protein kinase GSK2 (402 aa).

The segment at 1 to 38 (MDQPAPAPEPMLLDAQPPAAVACDKKQQEGEAPYAEGN) is disordered. Residues 63–347 (YMAERVVGTG…ALDACAHPFF (285 aa)) enclose the Protein kinase domain. Residues 69–77 (VGTGSFGIV) and Lys-92 contribute to the ATP site. The active-site Proton acceptor is the Asp-188.

This sequence belongs to the protein kinase superfamily. CMGC Ser/Thr protein kinase family. GSK-3 subfamily. Interacts with DLT. Interacts with OFP8. Interacts with GRF4. Interacts with PUB24. Interacts with SMOS1. In terms of processing, autophosphorylated. In terms of tissue distribution, expressed in lamina joints, vascular tissue and nodes.

It localises to the cytoplasm. It is found in the nucleus. It carries out the reaction L-seryl-[protein] + ATP = O-phospho-L-seryl-[protein] + ADP + H(+). The catalysed reaction is L-threonyl-[protein] + ATP = O-phospho-L-threonyl-[protein] + ADP + H(+). Functionally, serine-threonine kinase that acts as a negative regulator of brassinosteroid (BR) signaling. Phosphorylates DLT and BZR1, two positive regulators that mediates several BR responses. Phosphorylation of DLT and BZR1 inhibits their activities in BR signaling. Phosphorylates OFP8, a positive regulator of BR responses. Phosphorylated OFP8 shuttles from the nucleus to the cytoplasm where it is degraded by the proteasome. Phosphorylates the E3 ubiquitin-protein ligase PUB24, a negative regulator of BR signaling, which targets BZR1 and promotes its degradation via the 26S proteasome. Phosphorylation of PUB24 increases its stability. Phosphorylates the AP2-ERF transcription factor SMOS1, a positive regulator of BR signaling, which cooperatively functions in a transactivating complex with BZR1 to enhance the transcription of BR biosynthetic genes. Phosphorylation of SMOS1 leads to its degradation by an unknown mechanism. This is Shaggy-related protein kinase GSK2 from Oryza sativa subsp. japonica (Rice).